The chain runs to 322 residues: uncharacterized protein (322 aa).

Transmembrane regions (helical) follow at residues 5 to 25, 37 to 57, 71 to 91, 109 to 129, 153 to 173, 189 to 209, 245 to 265, 268 to 288, and 300 to 320; these read LISI…IPGI, IGPS…FKET, LPLL…LTSF, MMYV…MPFI, SFKM…LPFV, LFSL…VIMI, LLLI…APDI, PITI…ATFV, and IYPI…FALL.

The protein localises to the cell membrane. This is an uncharacterized protein from Methanocaldococcus jannaschii (strain ATCC 43067 / DSM 2661 / JAL-1 / JCM 10045 / NBRC 100440) (Methanococcus jannaschii).